Reading from the N-terminus, the 231-residue chain is NADH-ubiquinone oxidoreductase chain 4 (231 aa).

The next 6 helical transmembrane spans lie at 1 to 21, 34 to 54, 63 to 85, 89 to 111, 128 to 148, and 156 to 176; these read PIAGSMVLAAILLKLGGYGII, MFLPFVVLALWGAILANLTCL, IAYSSISHMGLVVAAIIIQTPWG, AMALMIAHGFTSSALFCLANTTY, ILPMATTWWLLTNLMNIAVPP, and LLIMSALFNWCPTTIIMLGLS.

This sequence belongs to the complex I subunit 4 family.

The protein localises to the mitochondrion membrane. The enzyme catalyses a ubiquinone + NADH + 5 H(+)(in) = a ubiquinol + NAD(+) + 4 H(+)(out). In terms of biological role, core subunit of the mitochondrial membrane respiratory chain NADH dehydrogenase (Complex I) that is believed to belong to the minimal assembly required for catalysis. Complex I functions in the transfer of electrons from NADH to the respiratory chain. The immediate electron acceptor for the enzyme is believed to be ubiquinone. The sequence is that of NADH-ubiquinone oxidoreductase chain 4 (MT-ND4) from Agkistrodon contortrix contortrix (Southern copperhead).